We begin with the raw amino-acid sequence, 147 residues long: 18 kDa antigen 1 (147 aa).

The sHSP domain maps to 21–131 (TPTRPAVMPM…RPRKIAVGAA (111 aa)).

The protein belongs to the small heat shock protein (HSP20) family.

Not known. This protein is one of the major immune reactive proteins in mycobacteria. The polypeptide is 18 kDa antigen 1 (Mycobacterium avium).